Here is a 314-residue protein sequence, read N- to C-terminus: Porphobilinogen deaminase (314 aa).

S-(dipyrrolylmethanemethyl)cysteine is present on cysteine 249.

This sequence belongs to the HMBS family. As to quaternary structure, monomer. Requires dipyrromethane as cofactor.

The enzyme catalyses 4 porphobilinogen + H2O = hydroxymethylbilane + 4 NH4(+). Its pathway is porphyrin-containing compound metabolism; protoporphyrin-IX biosynthesis; coproporphyrinogen-III from 5-aminolevulinate: step 2/4. Its function is as follows. Tetrapolymerization of the monopyrrole PBG into the hydroxymethylbilane pre-uroporphyrinogen in several discrete steps. The sequence is that of Porphobilinogen deaminase from Brucella anthropi (strain ATCC 49188 / DSM 6882 / CCUG 24695 / JCM 21032 / LMG 3331 / NBRC 15819 / NCTC 12168 / Alc 37) (Ochrobactrum anthropi).